Here is a 541-residue protein sequence, read N- to C-terminus: Valine N-monooxygenase 2 (541 aa).

Residues 1–18 (MAMNVSTTATTTASFAST) lie on the Cytoplasmic side of the membrane. A helical membrane pass occupies residues 19-41 (SSMNNTAKILLITLFISIVSTVI). Residues 42–541 (KLQKRASYKK…LAPHLYPTSP (500 aa)) are Lumenal-facing. The N-linked (GlcNAc...) asparagine glycan is linked to Asn-277. Cys-477 contributes to the heme binding site. N-linked (GlcNAc...) asparagine glycosylation occurs at Asn-505.

Belongs to the cytochrome P450 family. The cofactor is heme. Expressed in the epidermis, the next two cortex cell layers, the endodermis and the pericycle of leaf petioles. Strong expression around the laticifers among the phloem cells and in parenchymatic cells between the protoxylem and the metaxylem cells. In the leaves, preferentially expressed in the mesophyll cells adjacent to the epidermis.

The protein localises to the microsome membrane. It carries out the reaction L-valine + 2 reduced [NADPH--hemoprotein reductase] + 2 O2 = (E)-2-methylpropanal oxime + 2 oxidized [NADPH--hemoprotein reductase] + CO2 + 3 H2O + 2 H(+). It catalyses the reaction L-valine + reduced [NADPH--hemoprotein reductase] + O2 = N-hydroxy-L-valine + oxidized [NADPH--hemoprotein reductase] + H2O + 2 H(+). The catalysed reaction is N-hydroxy-L-valine + reduced [NADPH--hemoprotein reductase] + O2 = N,N-dihydroxy-L-valine + oxidized [NADPH--hemoprotein reductase] + H2O + H(+). The enzyme catalyses L-isoleucine + 2 reduced [NADPH--hemoprotein reductase] + 2 O2 = (1E,2S)-2-methylbutanal oxime + 2 oxidized [NADPH--hemoprotein reductase] + CO2 + 3 H2O + 2 H(+). It carries out the reaction L-isoleucine + reduced [NADPH--hemoprotein reductase] + O2 = N-hydroxy-L-isoleucine + oxidized [NADPH--hemoprotein reductase] + H2O + 2 H(+). It catalyses the reaction N-hydroxy-L-isoleucine + reduced [NADPH--hemoprotein reductase] + O2 = N,N-dihydroxy-L-isoleucine + oxidized [NADPH--hemoprotein reductase] + H2O + H(+). In terms of biological role, involved in the biosynthesis of the cyanogenic glucosides linamarin and lotaustralin. Can use L-valine or L-isoleucine as substrate. Catalyzes multi-step reactions starting with two successive N-hydroxylations using L-valine and L-isoleucine as substrates leading to the formation of N,N-dihydroxy-L-valine and N,N-dihydroxy-L-isoleucine, respectively; following spontaneous reactions lead to the production of (E)-2-methylpropanal oxime and (1E,2S)-2-methylbutanal oxime, respectively. This is Valine N-monooxygenase 2 from Manihot esculenta (Cassava).